The following is a 465-amino-acid chain: Cysteine--tRNA ligase (465 aa).

Residue Cys-29 coordinates Zn(2+). A 'HIGH' region motif is present at residues Pro-31–Asn-41. Zn(2+)-binding residues include Cys-209, His-234, and Glu-238. The short motif at Lys-266 to Ser-270 is the 'KMSKS' region element. An ATP-binding site is contributed by Lys-269. Position 270 is a phosphoserine (Ser-270).

It belongs to the class-I aminoacyl-tRNA synthetase family. As to quaternary structure, monomer. It depends on Zn(2+) as a cofactor.

Its subcellular location is the cytoplasm. It catalyses the reaction tRNA(Cys) + L-cysteine + ATP = L-cysteinyl-tRNA(Cys) + AMP + diphosphate. The polypeptide is Cysteine--tRNA ligase (Bacillus thuringiensis (strain Al Hakam)).